The following is a 254-amino-acid chain: Syntaxin-6 (254 aa).

Residues 1–233 are Cytoplasmic-facing; that stretch reads MSMEDPFFVV…VSHMTSDRRQ (233 aa). Residues 46-72 are a coiled coil; sequence TTNELRNNLRSIEWDLEDLDETISIVE. Positions 103-138 are disordered; it reads KDQMSNSSMQALAERKNRQALLGESSSQSWSSGPDK. Residues 162-224 enclose the t-SNARE coiled-coil homology domain; it reads QLIVEQQDEQ…DNVMKKLAKV (63 aa). A helical; Anchor for type IV membrane protein membrane pass occupies residues 234–254; the sequence is WCAIIVLFVILLVVLVLFLVL.

This sequence belongs to the syntaxin family.

The protein localises to the golgi apparatus membrane. The protein resides in the golgi apparatus. It is found in the trans-Golgi network membrane. Its subcellular location is the recycling endosome membrane. Functionally, SNARE promoting movement of transport vesicles to target membranes. Targets endosomes to the trans-Golgi network, and may therefore function in retrograde trafficking. Together with SNARE STX12, promotes movement of vesicles from endosomes to the cell membrane, and may therefore function in the endocytic recycling pathway. This is Syntaxin-6 (STX6) from Gallus gallus (Chicken).